We begin with the raw amino-acid sequence, 422 residues long: 3-carboxy-cis,cis-muconate cycloisomerase (422 aa).

This sequence belongs to the class-II fumarase/aspartase family. In terms of assembly, homotetramer.

It localises to the cytoplasm. It carries out the reaction 2-(carboxymethyl)-5-oxo-2,5-dihydro-2-furoate = 3-carboxy-cis,cis-muconate + H(+). The protein operates within aromatic compound metabolism; beta-ketoadipate pathway; 5-oxo-4,5-dihydro-2-furylacetate from 3-carboxy-cis,cis-muconate: step 1/2. Catalyzes an anti cycloisomerization. The protein is 3-carboxy-cis,cis-muconate cycloisomerase (pcaB) of Pseudomonas putida (Arthrobacter siderocapsulatus).